The following is a 140-amino-acid chain: Ribosome maturation factor RimP (140 aa).

It belongs to the RimP family.

Its subcellular location is the cytoplasm. Its function is as follows. Required for maturation of 30S ribosomal subunits. In Campylobacter hominis (strain ATCC BAA-381 / DSM 21671 / CCUG 45161 / LMG 19568 / NCTC 13146 / CH001A), this protein is Ribosome maturation factor RimP.